A 506-amino-acid chain; its full sequence is MAVDMELDGGGDGKGKAPPQISLSGLFLACMVAGGVQYGWALQLSLLTPYIQTLGIPHALTSVMWLCGPIAGLIVQPCVGLYSDKCTSSLGRRRPFILTGCIIICISVIVIGFSSDIGYALGDATEDCKVYRGPRYHAAAAFILGFWLLDFSNNTVQGPARALMADLSGRHGPSAANAIFCSWMALGNILGYSSGSTNDWHKWFPFLMTRACCEACANLKAAFLVAVVFLGLSTAVTMVFAREVALDPVAAAKRNEGEASGPLAVFKGMKNLPVGMPSVLIVTGLTWLSWFPFILFDTDWMGREIYHGRPDGSPAEVTAFQEGVRQGAFGLLLNSIVLGISSFLIEPMCRRLGARAVWVMSSAVVCVAMAAVSVLSAWSLGDFGGSVQDAARAPAEEGGVRASALALFVFLGLPFAVLCSVPFAVTAQLTASRGGGQGLCTGVLNISIVVPQMAIALGAGPWDELFGEGNIPAFAMASVFAAAAAAAGVVLLPKVSVRSVSMAGGH.

The Cytoplasmic portion of the chain corresponds to 1–20 (MAVDMELDGGGDGKGKAPPQ). The helical transmembrane segment at 21–41 (ISLSGLFLACMVAGGVQYGWA) threads the bilayer. The Extracellular portion of the chain corresponds to 42-54 (LQLSLLTPYIQTL). The helical transmembrane segment at 55-75 (GIPHALTSVMWLCGPIAGLIV) threads the bilayer. Topologically, residues 76 to 94 (QPCVGLYSDKCTSSLGRRR) are cytoplasmic. A helical membrane pass occupies residues 95-115 (PFILTGCIIICISVIVIGFSS). The Extracellular portion of the chain corresponds to 116–135 (DIGYALGDATEDCKVYRGPR). A helical transmembrane segment spans residues 136 to 156 (YHAAAAFILGFWLLDFSNNTV). The Cytoplasmic segment spans residues 157–171 (QGPARALMADLSGRH). A helical membrane pass occupies residues 172–192 (GPSAANAIFCSWMALGNILGY). Residues 193–220 (SSGSTNDWHKWFPFLMTRACCEACANLK) are Extracellular-facing. A helical membrane pass occupies residues 221–241 (AAFLVAVVFLGLSTAVTMVFA). The Cytoplasmic portion of the chain corresponds to 242–275 (REVALDPVAAAKRNEGEASGPLAVFKGMKNLPVG). The helical transmembrane segment at 276–296 (MPSVLIVTGLTWLSWFPFILF) threads the bilayer. Residues 297-327 (DTDWMGREIYHGRPDGSPAEVTAFQEGVRQG) lie on the Extracellular side of the membrane. A helical membrane pass occupies residues 328–348 (AFGLLLNSIVLGISSFLIEPM). Over 349-355 (CRRLGAR) the chain is Cytoplasmic. Residues 356–376 (AVWVMSSAVVCVAMAAVSVLS) form a helical membrane-spanning segment. Residues 377 to 404 (AWSLGDFGGSVQDAARAPAEEGGVRASA) are Extracellular-facing. Residues 405 to 425 (LALFVFLGLPFAVLCSVPFAV) traverse the membrane as a helical segment. Residues 426–441 (TAQLTASRGGGQGLCT) lie on the Cytoplasmic side of the membrane. Residues 442–462 (GVLNISIVVPQMAIALGAGPW) traverse the membrane as a helical segment. Residues 463-470 (DELFGEGN) lie on the Extracellular side of the membrane. The chain crosses the membrane as a helical span at residues 471-491 (IPAFAMASVFAAAAAAAGVVL). Topologically, residues 492–506 (LPKVSVRSVSMAGGH) are cytoplasmic.

It belongs to the glycoside-pentoside-hexuronide (GPH) cation symporter transporter (TC 2.A.2.4) family. Homodimer.

The protein localises to the cell membrane. It participates in glycan biosynthesis; sucrose metabolism. Functionally, responsible for the transport of sucrose into the cell, with the concomitant uptake of protons (symport system). May also transport other glucosides. This is Sucrose transport protein SUT3 (SUT3) from Oryza sativa subsp. indica (Rice).